We begin with the raw amino-acid sequence, 251 residues long: Protein unc-119 homolog B (251 aa).

A disordered region spans residues 1 to 28 (MSGSNPKAAAAASAAGPGGLVAGKEEKK). The residue at position 2 (Ser-2) is an N-acetylserine. Lys-24 carries the N6-acetyllysine modification. A tetradecanoate-binding site is contributed by Tyr-142.

The protein belongs to the PDE6D/unc-119 family. As to quaternary structure, found in a complex with ARL3, RP2 and UNC119B; RP2 induces hydrolysis of GTP ARL3 in the complex, leading to the release of UNC119B. Interacts with NPHP3 (when myristoylated). Interacts with CYS1 (when myristoylated). Interacts with MACIR; interaction only takes place when UNC119B is not liganded with myristoylated proteins.

It is found in the cell projection. The protein resides in the cilium. Myristoyl-binding protein that acts as a cargo adapter: specifically binds the myristoyl moiety of a subset of N-terminally myristoylated proteins and is required for their localization. Binds myristoylated NPHP3 and plays a key role in localization of NPHP3 to the primary cilium membrane. Does not bind all myristoylated proteins. Probably plays a role in trafficking proteins in photoreceptor cells. The chain is Protein unc-119 homolog B (UNC119B) from Homo sapiens (Human).